Reading from the N-terminus, the 319-residue chain is Protease HtpX homolog (319 aa).

Transmembrane regions (helical) follow at residues 6–26 (TAML…VIGG) and 28–48 (GGMM…YWNS). A Zn(2+)-binding site is contributed by His130. The active site involves Glu131. His134 serves as a coordination point for Zn(2+). A run of 2 helical transmembrane segments spans residues 145-165 (LTAT…FFGG) and 172-192 (PLGF…AMLV). Glu201 is a Zn(2+) binding site. A disordered region spans residues 277–319 (MARETSTGSTAPVRPDNAGRKSRSVPRTGWGRGGSEPPKGPWS).

The protein belongs to the peptidase M48B family. Zn(2+) serves as cofactor.

It is found in the cell inner membrane. The polypeptide is Protease HtpX homolog (Rhizobium meliloti (strain 1021) (Ensifer meliloti)).